A 117-amino-acid chain; its full sequence is UPF0102 protein FTW_1281 (117 aa).

Belongs to the UPF0102 family.

This Francisella tularensis subsp. tularensis (strain WY96-3418) protein is UPF0102 protein FTW_1281.